A 259-amino-acid polypeptide reads, in one-letter code: Acetylglutamate kinase (259 aa).

Substrate is bound by residues 45-46 (GG), R67, and N159.

It belongs to the acetylglutamate kinase family. ArgB subfamily.

Its subcellular location is the cytoplasm. It carries out the reaction N-acetyl-L-glutamate + ATP = N-acetyl-L-glutamyl 5-phosphate + ADP. Its pathway is amino-acid biosynthesis; L-arginine biosynthesis; N(2)-acetyl-L-ornithine from L-glutamate: step 2/4. Functionally, catalyzes the ATP-dependent phosphorylation of N-acetyl-L-glutamate. The polypeptide is Acetylglutamate kinase (Aeromonas salmonicida (strain A449)).